A 1213-amino-acid polypeptide reads, in one-letter code: Probable ATP-binding protein BrxC (1213 aa).

It belongs to the BrxC family.

BREX systems (bacteriophage exclusion) provide immunity against bacteriophage. Part of a type 1 BREX system which protects against dsDNA phage. This system allows phage adsorption but prevents phage DNA replication, without degradation of the phage DNA. Methylation of bacterial DNA by PglX guides self/non-self discrimination. When the brxA-brxB-brxC-pglX-pglZ-brxL genes are transformed into a susceptible E.coli strain (BW25113) they confer very high resistance to infection by bacteriophage VR7 and VpaE1, about 100-fold protection against lambda, T5 and T7 and no protection against RNA phage Qbeta, ssDNA phage M13 or dSDNA phage T4 and VR5. Glycosylated phage DNA is not susceptible to BREX. The BREX system does not confer resistance to lysogenic lambda phage, i.e. prophage that are integrated into the chromosomal DNA and then induced to form phage. The sequence is that of Probable ATP-binding protein BrxC from Escherichia coli O9:H4 (strain HS).